The following is a 210-amino-acid chain: Ribonuclease HII (210 aa).

The 190-residue stretch at 18–207 folds into the RNase H type-2 domain; sequence RFVAGVDEVG…VHKILCKEET (190 aa). 3 residues coordinate a divalent metal cation: D24, E25, and D115.

It belongs to the RNase HII family. The cofactor is Mn(2+). Mg(2+) is required as a cofactor.

It is found in the cytoplasm. It catalyses the reaction Endonucleolytic cleavage to 5'-phosphomonoester.. Endonuclease that specifically degrades the RNA of RNA-DNA hybrids. This chain is Ribonuclease HII, found in Paracoccus denitrificans (strain Pd 1222).